The chain runs to 93 residues: Mammaglobin-A (93 aa).

A signal peptide spans Met1–Ala18. Residues Asn53 and Asn68 are each glycosylated (N-linked (GlcNAc...) asparagine).

This sequence belongs to the secretoglobin family. Lipophilin subfamily. As to expression, mammary gland specific. Over-expressed in breast cancer.

Its subcellular location is the secreted. The chain is Mammaglobin-A (SCGB2A2) from Homo sapiens (Human).